A 229-amino-acid chain; its full sequence is MESPKTFMRKLPITPGYCGFIPWLSCQESSSEDRMNPCVKAFQERTQRYKEDQQGLNCSVANTPPLKPICSEDTVLWVLHEYAKKYHPLTLECKNEKKPLQEPPIPGWAGYLPRARVTEFGYATRYTIMAKKCYKDFLDLVEQAKRAQLKPYEQTYDVRAAQPLSPSSKILQLQGLSPAFPEFSGPGQTPPSEDPQAPRPCGCAQWSSQSCSRNVYGEPPSLAKAFAES.

Residues proline 181–cysteine 201 are disordered.

In terms of assembly, microtubule inner protein component of sperm flagellar doublet microtubules. In terms of tissue distribution, expressed in testis (at protein level).

The protein localises to the cytoplasm. Its subcellular location is the cytoskeleton. The protein resides in the flagellum axoneme. It localises to the nucleus. Its function is as follows. Microtubule inner protein (MIP) part of the dynein-decorated doublet microtubules (DMTs) in flagellum axoneme. May serve to reinforce and thus stabilize the microtubule structure in the sperm flagella. This Mus musculus (Mouse) protein is Sperm-associated microtubule inner protein 5 (Spmip5).